The chain runs to 399 residues: F420-dependent formate dehydrogenase subunit beta (399 aa).

4Fe-4S ferredoxin-type domains lie at 287–307 (TEYM…EACP) and 339–367 (ERML…LAKI). 8 residues coordinate [4Fe-4S] cluster: C296, C299, C302, C306, C348, C351, C354, and C358.

The protein belongs to the FrhB family. Dimer of an alpha (FdhA) and a beta (FdhB) subunit. It depends on [4Fe-4S] cluster as a cofactor. The cofactor is FAD. Zn(2+) is required as a cofactor.

It carries out the reaction oxidized coenzyme F420-(gamma-L-Glu)(n) + formate + 2 H(+) = reduced coenzyme F420-(gamma-L-Glu)(n) + CO2. Is extremely sensitive to oxygen. Contains a FAD that is required for coenzyme F420-dependent activity but not for methyl viologen-dependent activity. Preincubation of the FAD-depleted enzyme with FAD restores coenzyme F420-dependent activity. Neither FMN nor FADH2 can replace FAD. Strongly inhibited by cyanide, azide, alpha,alpha-dipyridyl and 1,10-phenanthroline. Functionally, catalyzes the oxidation of formate to carbon dioxide, with coenzyme F420 as the electron acceptor. In vitro can also use methyl viologen, 7,8-didemethyl-8-hydroxy-5-deazariboflavin (or FO, a hydrolytic derivative of coenzyme F420), FMN and FAD as electron acceptors, but not NAD(+) or NADP(+). This is F420-dependent formate dehydrogenase subunit beta from Methanobacterium formicicum.